We begin with the raw amino-acid sequence, 197 residues long: Short chain dehydrogenase ausX (197 aa).

4 residues coordinate NADP(+): isoleucine 49, aspartate 95, arginine 157, and tyrosine 189. Residue tyrosine 189 is the Proton acceptor of the active site. Residue tyrosine 189 is the Proton donor of the active site.

The protein belongs to the short-chain dehydrogenases/reductases (SDR) family.

Its pathway is secondary metabolite biosynthesis; terpenoid biosynthesis. In terms of biological role, short chain dehydrogenase; part of the gene cluster A that mediates the biosynthesis of austinol and dehydroaustinol, two fungal meroterpenoids. The first step of the pathway is the synthesis of 3,5-dimethylorsellinic acid by the polyketide synthase ausA. 3,5-dimethylorsellinic acid is then prenylated by the polyprenyl transferase ausN. Further epoxidation by the FAD-dependent monooxygenase ausM and cyclization by the probable terpene cyclase ausL lead to the formation of protoaustinoid A. Protoaustinoid A is then oxidized to spiro-lactone preaustinoid A3 by the combined action of the FAD-binding monooxygenases ausB and ausC, and the dioxygenase ausE. Acid-catalyzed keto-rearrangement and ring contraction of the tetraketide portion of preaustinoid A3 by ausJ lead to the formation of preaustinoid A4. The aldo-keto reductase ausK, with the help of ausH, is involved in the next step by transforming preaustinoid A4 into isoaustinone which is in turn hydroxylated by the P450 monooxygenase ausI to form austinolide. Finally, the cytochrome P450 monooxygenase ausG modifies austinolide to austinol. Austinol can be further modified to dehydroaustinol which forms a diffusible complex with diorcinol that initiates conidiation. Due to genetic rearrangements of the clusters and the subsequent loss of some enzymes, the end products of the Emericella nidulans austinoid biosynthesis clusters are austinol and dehydroaustinol, even if additional enzymes, such as the O-acetyltransferase ausQ and the cytochrome P450 monooxygenase ausR are still functional. This Emericella nidulans (strain FGSC A4 / ATCC 38163 / CBS 112.46 / NRRL 194 / M139) (Aspergillus nidulans) protein is Short chain dehydrogenase ausX.